The sequence spans 82 residues: MTIFNSISSISNSTRITSSSISTYNYNGSMANVNSTACFDNDFGGWGGLGGFNNGCGGCGGGSNVNVINFDIDIGRRHRRCC.

It belongs to the UPF0512 family.

This Dictyostelium discoideum (Social amoeba) protein is UPF0512 protein P.